Reading from the N-terminus, the 500-residue chain is V-type proton ATPase subunit B (500 aa).

It belongs to the ATPase alpha/beta chains family. V-ATPase is a heteromultimeric enzyme composed of a peripheral catalytic V1 complex (main components: subunits A, B, C, D, E, and F) attached to an integral membrane V0 proton pore complex (main component: the proteolipid protein).

Its function is as follows. Non-catalytic subunit of the peripheral V1 complex of vacuolar ATPase. V-ATPase is responsible for acidifying a variety of intracellular compartments in eukaryotic cells. This is V-type proton ATPase subunit B from Cyanidium caldarium (Red alga).